The primary structure comprises 327 residues: Peroxidase 15 (327 aa).

Residues 1–23 (MASFSPLLAMALAIFIFSSHSNA) form the signal peptide. Residue Gln-24 is modified to Pyrrolidone carboxylic acid. Disulfide bonds link Cys-34–Cys-115, Cys-67–Cys-72, Cys-121–Cys-323, and Cys-200–Cys-232. Asn-36 carries N-linked (GlcNAc...) asparagine glycosylation. His-65 (proton acceptor) is an active-site residue. Ca(2+) contacts are provided by Asp-66, Val-69, Gly-71, Asp-73, and Ser-75. Residues Asn-81, Asn-96, and Asn-159 are each glycosylated (N-linked (GlcNAc...) asparagine). Pro-163 serves as a coordination point for substrate. N-linked (GlcNAc...) asparagine glycans are attached at residues Asn-168 and Asn-171. His-193 contacts heme b. Ca(2+) is bound at residue Thr-194. N-linked (GlcNAc...) asparagine glycans are attached at residues Asn-209 and Asn-221. Ca(2+) contacts are provided by Asp-245, Thr-248, and Asp-253. N-linked (GlcNAc...) asparagine glycosylation is found at Asn-287 and Asn-291.

Belongs to the peroxidase family. Classical plant (class III) peroxidase subfamily. Ca(2+) is required as a cofactor. Heme b serves as cofactor.

Its subcellular location is the secreted. It carries out the reaction 2 a phenolic donor + H2O2 = 2 a phenolic radical donor + 2 H2O. In terms of biological role, removal of H(2)O(2), oxidation of toxic reductants, biosynthesis and degradation of lignin, suberization, auxin catabolism, response to environmental stresses such as wounding, pathogen attack and oxidative stress. These functions might be dependent on each isozyme/isoform in each plant tissue. This Ipomoea batatas (Sweet potato) protein is Peroxidase 15.